A 129-amino-acid polypeptide reads, in one-letter code: Small ribosomal subunit protein bS6 (129 aa).

This sequence belongs to the bacterial ribosomal protein bS6 family.

Functionally, binds together with bS18 to 16S ribosomal RNA. In Microcystis aeruginosa (strain NIES-843 / IAM M-2473), this protein is Small ribosomal subunit protein bS6.